The following is a 488-amino-acid chain: Catalase (488 aa).

Positions 1-24 are disordered; the sequence is MTERKNLTTNQGTPVGDNQNSMTA. Positions 7–23 are enriched in polar residues; sequence LTTNQGTPVGDNQNSMT. Residues H55 and N128 contribute to the active site. Residue Y338 participates in heme binding.

This sequence belongs to the catalase family. The cofactor is heme.

The protein localises to the cytoplasm. The catalysed reaction is 2 H2O2 = O2 + 2 H2O. Functionally, decomposes hydrogen peroxide into water and oxygen; serves to protect cells from the toxic effects of hydrogen peroxide. In Listeria innocua serovar 6a (strain ATCC BAA-680 / CLIP 11262), this protein is Catalase (kat).